The chain runs to 413 residues: Enolase (413 aa).

A (2R)-2-phosphoglycerate-binding site is contributed by glutamine 170. The Proton donor role is filled by glutamate 212. Residues aspartate 245, glutamate 286, and aspartate 313 each coordinate Mg(2+). 4 residues coordinate (2R)-2-phosphoglycerate: lysine 338, arginine 367, serine 368, and lysine 389. Residue lysine 338 is the Proton acceptor of the active site.

The protein belongs to the enolase family. The cofactor is Mg(2+).

It localises to the cytoplasm. The protein localises to the secreted. The protein resides in the cell surface. It catalyses the reaction (2R)-2-phosphoglycerate = phosphoenolpyruvate + H2O. The protein operates within carbohydrate degradation; glycolysis; pyruvate from D-glyceraldehyde 3-phosphate: step 4/5. Functionally, catalyzes the reversible conversion of 2-phosphoglycerate (2-PG) into phosphoenolpyruvate (PEP). It is essential for the degradation of carbohydrates via glycolysis. The protein is Enolase of Neorickettsia sennetsu (strain ATCC VR-367 / Miyayama) (Ehrlichia sennetsu).